The following is a 471-amino-acid chain: Tetratricopeptide repeat protein 29 (471 aa).

TPR repeat units follow at residues D92–E131, Y136–I173, A182–R215, V234–G267, G274–L307, G314–N347, and I354–L387. The disordered stretch occupies residues A449 to Q471.

In terms of tissue distribution, expressed in spermatozoa (at protein level).

It is found in the cytoplasm. The protein resides in the cytoskeleton. It localises to the flagellum axoneme. In terms of biological role, axonemal protein which is implicated in axonemal and/or peri-axonemal structure assembly and regulates flagellum assembly and beating and therefore sperm motility. In Mus musculus (Mouse), this protein is Tetratricopeptide repeat protein 29 (Ttc29).